The chain runs to 640 residues: Leucine-rich repeat-containing protein 4C (640 aa).

An N-terminal signal peptide occupies residues 1 to 44 (MLNKMTLHPQQIMIGPRFNRALFDPLLVVLLALQLLVVAGLVRA). Residues 45-76 (QTCPSVCSCSNQFSKVICVRKNLREVPDGIST) form the LRRNT domain. 9 LRR repeats span residues 77–98 (NTRL…SFKH), 101–122 (HLEI…AFNG), 125–146 (NLNT…AFVY), 149–170 (KLKE…AFNR), 173–195 (SLRR…AFEG), 198–219 (NLRY…TPLI), 220–241 (KLDE…SFQG), 244–265 (HLQK…AFDN), and 268–289 (SLVE…LFTP). The region spanning 301-353 (NPWNCNCDILWLSWWIKDMAPSNTACCARCNTPPNLKGRYIGELDQNYFTCYA) is the LRRCT domain. Positions 354-442 (PVIVEPPADL…GNTTASATLN (89 aa)) constitute an Ig-like C2-type domain. The cysteines at positions 375 and 426 are disulfide-linked. Positions 463-483 (EPSQDEARTTDNNVGPTPVVD) are disordered. A helical membrane pass occupies residues 528-548 (IIIGCFVAITLMAAVMLVIFY). At Ser-631 the chain carries Phosphoserine.

As to quaternary structure, interacts with NTNG1 and WHRN. As to expression, highly expressed in the cerebral cortex, including frontal, parietal and occipital lobes. Putamen, amygdala, hippocampus and medulla oblongata show moderate expression. Caudate nucleus and thalamus express small amounts, whereas other brain regions show very weak or no expression.

Its subcellular location is the postsynaptic cell membrane. In terms of biological role, may promote neurite outgrowth of developing thalamic neurons. The polypeptide is Leucine-rich repeat-containing protein 4C (LRRC4C) (Homo sapiens (Human)).